The primary structure comprises 201 residues: Guanylate kinase (201 aa).

The 180-residue stretch at 7 to 186 (GVLLVLSSPS…SVEEISSILN (180 aa)) folds into the Guanylate kinase-like domain. 14-21 (SPSGAGKT) contributes to the ATP binding site.

This sequence belongs to the guanylate kinase family.

It localises to the cytoplasm. The enzyme catalyses GMP + ATP = GDP + ADP. Its function is as follows. Essential for recycling GMP and indirectly, cGMP. The protein is Guanylate kinase of Wolbachia pipientis wMel.